A 505-amino-acid chain; its full sequence is MDVPCPWYSLLIPLFVFIFLLIHHCFFTTSKKQNMLLLPSPRKLPIIGNLHQLGSLPHRSLHKLSQKYGPVMLLHFGSKPVIVASSVDAARDIMKTHDVVWASRPKSSIVDRLSYGSKDVGFSPFGEYWRRAKSITVLHLLSNTRVQSYRNVRAEETANMIGKIRQGCDSSVINLGEHLCSLTNNIISRVALGRTYDEKESGIEHIIEQFVELLGIFNVGDYIPRLEWVNKFTGLDAKVKKVAKELDMFLEIVIEEHIIRKKKEEYTSTGEAKDFVDVLLEIQNGNETDFPLQRDSLKAILLDSFAAGTDTTFATLDWTMAELLRQPRALKTLQDEVRGLAQGKSEITEDDLKNMQYLRAVIKESLRLHPTQESLLVPRESMEDVNLLGYYHIPARTQAIINAWAIGRDPLSWENPEEYQPERFLNSDADVKGLNFKLLPFGAGRRGCPGSSFAIAVIELALARLVHKFDFALPEGIKPEDLDMTETIGITTRRKLPLLVVATPC.

The helical transmembrane segment at 7–27 (WYSLLIPLFVFIFLLIHHCFF) threads the bilayer. Position 448 (Cys-448) interacts with heme.

It belongs to the cytochrome P450 family. It depends on heme as a cofactor.

It is found in the membrane. Its function is as follows. May have a role in maturation, such as during flavor formation or other metabolite production specific to aging tissues. The sequence is that of Cytochrome P450 71A2 (CYP71A2) from Solanum melongena (Eggplant).